The primary structure comprises 388 residues: Chorismate synthase (388 aa).

Residues arginine 39 and arginine 45 each contribute to the NADP(+) site. Residues 132-134, 251-252, glycine 296, 311-315, and arginine 337 each bind FMN; these read RSS, NA, and KPIPT.

Homotetramer. The cofactor is FMNH2.

The enzyme catalyses 5-O-(1-carboxyvinyl)-3-phosphoshikimate = chorismate + phosphate. It participates in metabolic intermediate biosynthesis; chorismate biosynthesis; chorismate from D-erythrose 4-phosphate and phosphoenolpyruvate: step 7/7. In terms of biological role, catalyzes the anti-1,4-elimination of the C-3 phosphate and the C-6 proR hydrogen from 5-enolpyruvylshikimate-3-phosphate (EPSP) to yield chorismate, which is the branch point compound that serves as the starting substrate for the three terminal pathways of aromatic amino acid biosynthesis. This reaction introduces a second double bond into the aromatic ring system. This is Chorismate synthase from Staphylococcus aureus.